Here is a 407-residue protein sequence, read N- to C-terminus: Peptidase T (407 aa).

Position 77 (His-77) interacts with Zn(2+). Residue Asp-79 is part of the active site. Asp-138 lines the Zn(2+) pocket. The active-site Proton acceptor is the Glu-172. Zn(2+) contacts are provided by Glu-173, Asp-195, and His-377.

It belongs to the peptidase M20B family. Zn(2+) is required as a cofactor.

The protein localises to the cytoplasm. It catalyses the reaction Release of the N-terminal residue from a tripeptide.. Functionally, cleaves the N-terminal amino acid of tripeptides. In Aeromonas hydrophila subsp. hydrophila (strain ATCC 7966 / DSM 30187 / BCRC 13018 / CCUG 14551 / JCM 1027 / KCTC 2358 / NCIMB 9240 / NCTC 8049), this protein is Peptidase T.